A 356-amino-acid polypeptide reads, in one-letter code: MGFQILTINPGSTSTKVAWFDDDKLVWKDSVEHDAVTLSQFPSIAAQFELRASEVEKAVEKHGSDLNTLDAVVGRGGLLRPISSGVYSVNETMLKELIDARYGEHASNLGAPIAHAIASKVGCPAFIVDPVVVDEMDDISRLSGWPELPRKSIFHALNQKAVARRVARDFFSVPYEQLNLIVAHLGGGISIGAHKKGRVVDVNNALGGEGPMSPERAGTLPIMKLADYLYEHKPDRKEFSKKLVGKGGWVAHLGTNSGKDLEERVKNGDEHAILILKATGYQISKWIAQMAVALAGEVDGIIITGGLAYIPELVDFIQERVLWIAPVFVVPGEDEMLALAEGALRVLRGQEEAKTY.

This sequence belongs to the acetokinase family.

Its subcellular location is the cytoplasm. It carries out the reaction butanoate + ATP = butanoyl phosphate + ADP. In Coprothermobacter proteolyticus (strain ATCC 35245 / DSM 5265 / OCM 4 / BT), this protein is Probable butyrate kinase.